Consider the following 438-residue polypeptide: 23S rRNA (uracil(1939)-C(5))-methyltransferase RlmD (438 aa).

Residues 9 to 68 (RRTVNRHIITVTADNLDAQGQGVARHQGKTIFVAGLLPGEQAQVQLTEEKRQFAKAKLVK) enclose the TRAM domain. 4 residues coordinate [4Fe-4S] cluster: cysteine 81, cysteine 87, cysteine 90, and cysteine 168. 6 residues coordinate S-adenosyl-L-methionine: glutamine 272, phenylalanine 301, asparagine 306, glutamate 322, asparagine 349, and aspartate 370. Cysteine 396 serves as the catalytic Nucleophile.

It belongs to the class I-like SAM-binding methyltransferase superfamily. RNA M5U methyltransferase family. RlmD subfamily.

The enzyme catalyses uridine(1939) in 23S rRNA + S-adenosyl-L-methionine = 5-methyluridine(1939) in 23S rRNA + S-adenosyl-L-homocysteine + H(+). Catalyzes the formation of 5-methyl-uridine at position 1939 (m5U1939) in 23S rRNA. In Photorhabdus laumondii subsp. laumondii (strain DSM 15139 / CIP 105565 / TT01) (Photorhabdus luminescens subsp. laumondii), this protein is 23S rRNA (uracil(1939)-C(5))-methyltransferase RlmD.